Reading from the N-terminus, the 60-residue chain is Large ribosomal subunit protein bL32 (60 aa).

A compositionally biased stretch (basic residues) spans 1–23 (MAKHPVPKKKTSKSKRDMRRSHH). A disordered region spans residues 1-26 (MAKHPVPKKKTSKSKRDMRRSHHALV).

The protein belongs to the bacterial ribosomal protein bL32 family.

This Deinococcus geothermalis (strain DSM 11300 / CIP 105573 / AG-3a) protein is Large ribosomal subunit protein bL32.